Here is a 424-residue protein sequence, read N- to C-terminus: Histidine--tRNA ligase (424 aa).

Belongs to the class-II aminoacyl-tRNA synthetase family. Homodimer.

The protein resides in the cytoplasm. The catalysed reaction is tRNA(His) + L-histidine + ATP = L-histidyl-tRNA(His) + AMP + diphosphate + H(+). This Escherichia coli O139:H28 (strain E24377A / ETEC) protein is Histidine--tRNA ligase.